We begin with the raw amino-acid sequence, 35 residues long: MSDIN-like toxin proprotein 6 (35 aa).

A propeptide spanning residues 1–10 is cleaved from the precursor; the sequence is MSDINTTRLP. Positions 11-18 form a cross-link, cyclopeptide (Phe-Pro); that stretch reads FVFVASPP. Residues 19–35 constitute a propeptide that is removed on maturation; that stretch reads CVGDDIAMVLTRGENLC.

It belongs to the MSDIN fungal toxin family. Processed by the macrocyclase-peptidase enzyme POPB to yield a toxic cyclic octapeptide. POPB first removes 10 residues from the N-terminus. Conformational trapping of the remaining peptide forces the enzyme to release this intermediate rather than proceed to macrocyclization. The enzyme rebinds the remaining peptide in a different conformation and catalyzes macrocyclization of the N-terminal 8 residues. Expressed in basidiocarps.

In terms of biological role, probable toxin that belongs to the MSDIN-like toxin family responsible for a large number of food poisoning cases and deaths. This Amanita exitialis (Guangzhou destroying angel) protein is MSDIN-like toxin proprotein 6.